The chain runs to 84 residues: Large ribosomal subunit protein bL31B (84 aa).

This sequence belongs to the bacterial ribosomal protein bL31 family. Type B subfamily. In terms of assembly, part of the 50S ribosomal subunit.

In Rhodococcus opacus (strain B4), this protein is Large ribosomal subunit protein bL31B.